Here is a 427-residue protein sequence, read N- to C-terminus: Ceramide Synthase FUM18 (427 aa).

Asn-20 carries N-linked (GlcNAc...) asparagine glycosylation. The next 6 helical transmembrane spans lie at 38-58 (ILPL…IHIS), 131-151 (EQGW…LIWA), 173-193 (GLIK…VISV), 202-222 (YWLN…CYVY), 250-270 (YLGF…TWIV), and 335-355 (VSIL…FGFI). The 241-residue stretch at 124–364 (RKVVRFSEQG…ICKVAIGVLD (241 aa)) folds into the TLC domain. Residues 373 to 406 (SDVESDEEDSEPVANGSGWQQSQLQPGRRVGSNG) are disordered. Asn-387 is a glycosylation site (N-linked (GlcNAc...) asparagine).

It belongs to the sphingosine N-acyltransferase family.

The protein localises to the endoplasmic reticulum membrane. Its pathway is mycotoxin biosynthesis. In terms of biological role, ceramide synthase; part of the gene cluster that mediates the biosynthesis of fumonisins B1 (FB1), B2 (FB2), B3 (FB3), and B4 (FB4), which are carcinogenic mycotoxins. Plays a role in self-protection from FB1 toxicity by contributing to ceramide synthesis. The biosynthesis starts with the FUM1-catalyzed carbon chain assembly from one molecule of acetyl-CoA, eight molecules of malonyl-CoA, and two molecules of methionine (in S-adenosyl form). The C18 polyketide chain is released from the enzyme by a nucleophilic attack of a carbanion, which is derived from R-carbon of alanine by decarboxylation, on the carbonyl carbon of polyketide acyl chain. This step is catalyzed by the pyridoxal 5'-phosphate-dependent aminoacyl transferase FUM8. The resultant 3-keto intermediate is then stereospecifically reduced to a 3-hydroxyl product by reductase FUM13. Subsequent oxidations at C-10 by the cytochrome P450 monooxygenase FUM2, C-14 and C-15 by FUM6, FUM12 or FUM15, tricarballylic esterification of the hydroxyl groups on C-14 and C-15 by acyltransferase FUM14, and C-5 hydroxylation by 2-keto-glutarate-dependent dioxygenase FUM3 furnish the biosynthesis of fumonisins. The tricarballylic moieties are most likely derived from the citric acid cycle, and their addition to the carbon backbone may involve FUM7, FUM10, FUM11 and FUM14. The chain is Ceramide Synthase FUM18 from Gibberella moniliformis (strain M3125 / FGSC 7600) (Maize ear and stalk rot fungus).